A 214-amino-acid chain; its full sequence is MIRLIFLGAPGTGKGTISSYLKEQHGFFHISSGDLFRFYAKEEKTALAEEIKSYINNGLYVPDELTNRTVADFYHKNQSQDKIIFDGYPRTLNQCEYIDEIIKFTHVILLQPTDWDMIINRLSLRRSCPQCKRIYNINSVDFKPKVANLCDLCKVELIHRKDDDPSVVSTRINVYNEQTKPVIEYYKKKNLLHVVDANKSFEELYKLVLEIVNK.

11-16 (GTGKGT) provides a ligand contact to ATP. The interval 31–61 (SSGDLFRFYAKEEKTALAEEIKSYINNGLYV) is NMP. AMP contacts are provided by residues serine 32, arginine 37, 59–61 (LYV), 87–90 (GYPR), and glutamine 94. Residues 124 to 163 (LRRSCPQCKRIYNINSVDFKPKVANLCDLCKVELIHRKDD) are LID. An ATP-binding site is contributed by arginine 125. Positions 128 and 131 each coordinate Zn(2+). Residue 134 to 135 (IY) participates in ATP binding. Positions 150 and 153 each coordinate Zn(2+). AMP-binding residues include arginine 160 and arginine 171. Lysine 199 is a binding site for ATP.

The protein belongs to the adenylate kinase family. As to quaternary structure, monomer.

It is found in the cytoplasm. The enzyme catalyses AMP + ATP = 2 ADP. The protein operates within purine metabolism; AMP biosynthesis via salvage pathway; AMP from ADP: step 1/1. In terms of biological role, catalyzes the reversible transfer of the terminal phosphate group between ATP and AMP. Plays an important role in cellular energy homeostasis and in adenine nucleotide metabolism. The polypeptide is Adenylate kinase (Mycoplasmoides gallisepticum (strain R(low / passage 15 / clone 2)) (Mycoplasma gallisepticum)).